The following is an 81-amino-acid chain: WDKDIMLIRLNKPVSYSEHIAPLSLPSSPPIVGSVCRPHCANINLLDYEVCRTAHPQFRLPATSRILCAGVLEGGIDTCHR.

The active site involves Asp-4. A disulfide bridge links Cys-51 with Cys-68.

In terms of assembly, monomer. Expressed by the vanom gland.

The protein localises to the secreted. Thrombin-like snake venom serine protease. The polypeptide is Thrombin-like enzyme collinein-3 (Crotalus durissus collilineatus (Brazilian rattlesnake)).